The chain runs to 127 residues: DNA-directed RNA polymerases I, II, and III subunit RPABC2 (127 aa).

The segment covering 1 to 34 (MSDNEDNFDGDDFDDVEEDEGLDDLENAEEEGQE) has biased composition (acidic residues). Residues 1-53 (MSDNEDNFDGDDFDDVEEDEGLDDLENAEEEGQENVEILPSGERPQANQKRIT) form a disordered region. Ser2 carries the N-acetylserine modification. Ser2 carries the phosphoserine; by CK2 modification.

The protein belongs to the archaeal Rpo6/eukaryotic RPB6 RNA polymerase subunit family. As to quaternary structure, component of the RNA polymerase I (Pol I), RNA polymerase II (Pol II) and RNA polymerase III (Pol III) complexes consisting of at least 13, 12 and 17 subunits, respectively. Pol I complex consists of a ten-subunit catalytic core composed of POLR1A/RPA1, POLR1B/RPA2, POLR1C/RPAC1, POLR1D/RPAC2, POLR1H/RPA12, POLR2E/RPABC1, POLR2F/RPABC2, POLR2H/RPABC3, POLR2K/RPABC4 and POLR2L/RPABC5; a mobile stalk subunit POLR1F/RPA43 protruding from the core and additional subunits homologous to general transcription factors POLR1E/RPA49 and POLR1G/RPA34. Part of Pol I pre-initiation complex (PIC), in which Pol I core assembles with RRN3 and promoter-bound UTBF and SL1/TIF-IB complex. Pol II complex contains a ten-subunit catalytic core composed of POLR2A/RPB1, POLR2B/RPB2, POLR2C/RPB3, POLR2I/RPB9, POLR2J/RPB11, POLR2E/RPABC1, POLR2F/RPABC2, POLR2H/RPABC3, POLR2K/RPABC4 and POLR2L/RPABC5 and a mobile stalk composed of two subunits POLR2D/RPB4 and POLR2G/RPB7. Part of Pol II(G) complex, in which Pol II core associates with an additional subunit POLR2M; unlike conventional Pol II, Pol II(G) functions as a transcriptional repressor. Part of TBP-based Pol II pre-initiation complex (PIC), in which Pol II core assembles with general transcription factors and other specific initiation factors including GTF2E1, GTF2E2, GTF2F1, GTF2F2, TCEA1, ERCC2, ERCC3, GTF2H2, GTF2H3, GTF2H4, GTF2H5, GTF2A1, GTF2A2, GTF2B and TBP; this large multi-subunit PIC complex mediates DNA unwinding and targets Pol II core to the transcription start site where the first phosphodiester bond forms. Pol III complex consists of a ten-subunit catalytic core composed of POLR3A/RPC1, POLR3B/RPC2, POLR1C/RPAC1, POLR1D/RPAC2, POLR3K/RPC10, POLR2E/RPABC1, POLR2F/RPABC2, POLR2H/RPABC3, POLR2K/RPABC4 and POLR2L/RPABC5; a mobile stalk composed of two subunits POLR3H/RPC8 and CRCP/RPC9, protruding from the core and functioning primarily in transcription initiation; and additional subunits homologous to general transcription factors of the RNA polymerase II machinery, POLR3C/RPC3-POLR3F/RPC6-POLR3G/RPC7 heterotrimer required for transcription initiation and POLR3D/RPC4-POLR3E/RPC5 heterodimer involved in both transcription initiation and termination.

The protein resides in the nucleus. The protein localises to the nucleolus. DNA-dependent RNA polymerase catalyzes the transcription of DNA into RNA using the four ribonucleoside triphosphates as substrates. Common component of RNA polymerases I, II, and III which synthesize ribosomal RNA precursors, mRNA precursors and many functional non-coding RNAs, and small RNAs, such as 5S rRNA and tRNAs, respectively. Pol II is the central component of the basal RNA polymerase II transcription machinery. Pols are composed of mobile elements that move relative to each other. In Pol II, POLR2F/RPABC2 is part of the clamp element and together with parts of POLR2A/RPB1 and POLR2B/RPB2 forms a pocket to which the POLR2D/RPB4-POLR2G/RPB7 subcomplex binds. The polypeptide is DNA-directed RNA polymerases I, II, and III subunit RPABC2 (Homo sapiens (Human)).